A 91-amino-acid polypeptide reads, in one-letter code: RNA-binding protein Hfq (91 aa).

In terms of domain architecture, Sm spans 9–69 (DRFLNMLRTG…ISTIMPSSFV (61 aa)).

This sequence belongs to the Hfq family. As to quaternary structure, homohexamer.

In terms of biological role, RNA chaperone that binds small regulatory RNA (sRNAs) and mRNAs to facilitate mRNA translational regulation in response to envelope stress, environmental stress and changes in metabolite concentrations. Also binds with high specificity to tRNAs. The chain is RNA-binding protein Hfq from Pseudothermotoga lettingae (strain ATCC BAA-301 / DSM 14385 / NBRC 107922 / TMO) (Thermotoga lettingae).